The following is a 439-amino-acid chain: Ribosomal protein uS12 methylthiotransferase RimO (439 aa).

The MTTase N-terminal domain occupies 6-116 (GKVGFVSLGC…VMNQVHQVAP (111 aa)). [4Fe-4S] cluster contacts are provided by Cys-15, Cys-51, Cys-80, Cys-148, Cys-152, and Cys-155. One can recognise a Radical SAM core domain in the interval 134-371 (LTPKHYAYLK…MEVQQRISAS (238 aa)). One can recognise a TRAM domain in the interval 374–439 (QAKIGKRMDV…DEYDLWGRPV (66 aa)).

The protein belongs to the methylthiotransferase family. RimO subfamily. [4Fe-4S] cluster serves as cofactor.

The protein resides in the cytoplasm. It catalyses the reaction L-aspartate(89)-[ribosomal protein uS12]-hydrogen + (sulfur carrier)-SH + AH2 + 2 S-adenosyl-L-methionine = 3-methylsulfanyl-L-aspartate(89)-[ribosomal protein uS12]-hydrogen + (sulfur carrier)-H + 5'-deoxyadenosine + L-methionine + A + S-adenosyl-L-homocysteine + 2 H(+). Catalyzes the methylthiolation of an aspartic acid residue of ribosomal protein uS12. The chain is Ribosomal protein uS12 methylthiotransferase RimO from Hahella chejuensis (strain KCTC 2396).